The chain runs to 306 residues: Large ribosomal subunit protein uL2m (306 aa).

The transit peptide at 1-60 directs the protein to the mitochondrion; the sequence is MALCALTSALRSLSLASAAITARVPTLLPAAQIQSNVLLQLPPALVSPSYRPVHMSADRS.

This sequence belongs to the universal ribosomal protein uL2 family. As to quaternary structure, component of the mitochondrial ribosome large subunit (39S) which comprises a 16S rRNA and about 50 distinct proteins.

It is found in the mitochondrion. In Mus musculus (Mouse), this protein is Large ribosomal subunit protein uL2m (Mrpl2).